The chain runs to 203 residues: LexA repressor (203 aa).

The H-T-H motif DNA-binding region spans 30 to 50 (VREICQAVSLKSTSTVHGHLK). Active-site for autocatalytic cleavage activity residues include serine 127 and lysine 164.

The protein belongs to the peptidase S24 family. As to quaternary structure, homodimer.

The catalysed reaction is Hydrolysis of Ala-|-Gly bond in repressor LexA.. In terms of biological role, represses a number of genes involved in the response to DNA damage (SOS response), including recA and lexA. In the presence of single-stranded DNA, RecA interacts with LexA causing an autocatalytic cleavage which disrupts the DNA-binding part of LexA, leading to derepression of the SOS regulon and eventually DNA repair. This chain is LexA repressor, found in Clostridium perfringens (strain 13 / Type A).